Here is a 490-residue protein sequence, read N- to C-terminus: Cobyric acid synthase (490 aa).

The GATase cobBQ-type domain maps to 250–432 (QLEIVVIRLP…LHGLLDNHAW (183 aa)). The active-site Nucleophile is cysteine 328. Histidine 424 is an active-site residue.

This sequence belongs to the CobB/CobQ family. CobQ subfamily.

The protein operates within cofactor biosynthesis; adenosylcobalamin biosynthesis. Functionally, catalyzes amidations at positions B, D, E, and G on adenosylcobyrinic A,C-diamide. NH(2) groups are provided by glutamine, and one molecule of ATP is hydrogenolyzed for each amidation. The polypeptide is Cobyric acid synthase (Gloeobacter violaceus (strain ATCC 29082 / PCC 7421)).